A 302-amino-acid chain; its full sequence is Acetylglutamate kinase (302 aa).

Residues 75 to 76, Arg97, and Asn198 each bind substrate; that span reads GG.

This sequence belongs to the acetylglutamate kinase family. ArgB subfamily.

The protein resides in the cytoplasm. It catalyses the reaction N-acetyl-L-glutamate + ATP = N-acetyl-L-glutamyl 5-phosphate + ADP. It participates in amino-acid biosynthesis; L-arginine biosynthesis; N(2)-acetyl-L-ornithine from L-glutamate: step 2/4. In terms of biological role, catalyzes the ATP-dependent phosphorylation of N-acetyl-L-glutamate. In Leifsonia xyli subsp. xyli (strain CTCB07), this protein is Acetylglutamate kinase.